We begin with the raw amino-acid sequence, 254 residues long: Type III pantothenate kinase (254 aa).

ATP is bound at residue 6-13; that stretch reads DVGNSNIV. Substrate-binding positions include Tyr-100 and 107 to 110; that span reads GADR. Asp-109 functions as the Proton acceptor in the catalytic mechanism. Residue Asp-129 coordinates K(+). Thr-132 is an ATP binding site. Thr-184 lines the substrate pocket.

This sequence belongs to the type III pantothenate kinase family. In terms of assembly, homodimer. NH4(+) is required as a cofactor. It depends on K(+) as a cofactor.

The protein resides in the cytoplasm. The catalysed reaction is (R)-pantothenate + ATP = (R)-4'-phosphopantothenate + ADP + H(+). Its pathway is cofactor biosynthesis; coenzyme A biosynthesis; CoA from (R)-pantothenate: step 1/5. Its function is as follows. Catalyzes the phosphorylation of pantothenate (Pan), the first step in CoA biosynthesis. The polypeptide is Type III pantothenate kinase (Pelobacter propionicus (strain DSM 2379 / NBRC 103807 / OttBd1)).